Here is a 400-residue protein sequence, read N- to C-terminus: Tryptophan synthase beta chain (400 aa).

Residue Lys-92 is modified to N6-(pyridoxal phosphate)lysine.

This sequence belongs to the TrpB family. Tetramer of two alpha and two beta chains. It depends on pyridoxal 5'-phosphate as a cofactor.

It catalyses the reaction (1S,2R)-1-C-(indol-3-yl)glycerol 3-phosphate + L-serine = D-glyceraldehyde 3-phosphate + L-tryptophan + H2O. The protein operates within amino-acid biosynthesis; L-tryptophan biosynthesis; L-tryptophan from chorismate: step 5/5. Its function is as follows. The beta subunit is responsible for the synthesis of L-tryptophan from indole and L-serine. This chain is Tryptophan synthase beta chain, found in Neisseria gonorrhoeae.